Here is a 66-residue protein sequence, read N- to C-terminus: Small ribosomal subunit protein bS21 (66 aa).

This sequence belongs to the bacterial ribosomal protein bS21 family.

This Bdellovibrio bacteriovorus (strain ATCC 15356 / DSM 50701 / NCIMB 9529 / HD100) protein is Small ribosomal subunit protein bS21.